Consider the following 615-residue polypeptide: MAVYHGMLRFGRLCIASLGARGPRTLLSRPRPNSKLQSVRALSSGMVNCTNPLPIGGLSYIQGHTDSHLVNTTVGECLDATAQRFPDREALVILHENIRLNFAQLKEEVDKAASGLLSIGLRKGDRLGMWGPNSYAWVLIQLATAQAGIILVSVNPAYQSSELEYVLRKVGCKGIVFPKQFKTQQYYDILKQVCPELEKAQPGALKSERLPDLTTVISVDAPLPGTLLLDDIVAAGGKEQNLAQLRYNQRFLSCYDPINIQFTSGTTGNPKGATLSHHNIVNNSMLIGQRLKMPTKTAEELRLVLPSPLYHCLGSVGGTMVSMMHGATLLLSSPSFNGKKALEAISREKGTLLYGTPTMFVDILNQPDFSSYDFTSIRGGVIAGSPAPPELIRAIINKMNMKELVVVYGTTENSPVTFMNFPEDTLEQKAGSVGRIMPHTEAQIVNVETGELTNLNVPGELYIRGYCVMQGYWGEPQKTFETVGQDKWYRTGDIALMDEQGFCKIVGRSKDMIIRGGENIYPAELEDFFLKHPQVQEAQVVGVKDERMGEEICACIRLKSGETTTAEEIKAFCKGKISHFKIPRYIVFVEGYPLTISGKIQKFKLREQMEQHLKL.

A mitochondrion-targeting transit peptide spans 1 to 41 (MAVYHGMLRFGRLCIASLGARGPRTLLSRPRPNSKLQSVRA). Lys-179 is subject to N6-acetyllysine. Residue Lys-182 is modified to N6-acetyllysine; alternate. Residue Lys-182 is modified to N6-succinyllysine; alternate. Lys-199 is modified (N6-acetyllysine). 263-271 (TSGTTGNPK) contacts ATP. Residues Lys-340 and Lys-398 each carry the N6-acetyllysine modification. The residue at position 478 (Lys-478) is an N6-succinyllysine. ATP is bound by residues Asp-493 and Arg-508. Lys-510 is modified (N6-acetyllysine). An N6-acetyllysine; alternate mark is found at Lys-544 and Lys-570. Residues Lys-544 and Lys-570 each carry the N6-succinyllysine; alternate modification. Position 599 (Lys-599) interacts with ATP. Position 599 is an N6-succinyllysine (Lys-599).

It belongs to the ATP-dependent AMP-binding enzyme family.

Its subcellular location is the mitochondrion. It catalyses the reaction a medium-chain fatty acid + ATP + CoA = a medium-chain fatty acyl-CoA + AMP + diphosphate. The catalysed reaction is octanoate + ATP + CoA = octanoyl-CoA + AMP + diphosphate. Acyl-CoA synthases catalyze the initial reaction in fatty acid metabolism, by forming a thioester with CoA. Has some preference toward medium-chain substrates. Plays a role in adipocyte differentiation. The chain is Medium-chain acyl-CoA ligase ACSF2, mitochondrial from Mus musculus (Mouse).